The primary structure comprises 225 residues: 2-phytyl-1,4-naphtoquinone methyltransferase (225 aa).

Belongs to the class I-like SAM-binding methyltransferase superfamily. MenG/UbiE family.

It catalyses the reaction demethylphylloquinol + S-adenosyl-L-methionine = phylloquinol + S-adenosyl-L-homocysteine + H(+). Its pathway is cofactor biosynthesis; phylloquinone biosynthesis. Methyltransferase required for the conversion of 2-phytyl-1,4-beta-naphthoquinol to phylloquinol. This chain is 2-phytyl-1,4-naphtoquinone methyltransferase, found in Thermosynechococcus vestitus (strain NIES-2133 / IAM M-273 / BP-1).